Consider the following 260-residue polypeptide: Flagellar basal-body rod protein FlgG (260 aa).

This sequence belongs to the flagella basal body rod proteins family. The basal body constitutes a major portion of the flagellar organelle and consists of four rings (L,P,S, and M) mounted on a central rod. The rod consists of about 26 subunits of FlgG in the distal portion, and FlgB, FlgC and FlgF are thought to build up the proximal portion of the rod with about 6 subunits each.

Its subcellular location is the bacterial flagellum basal body. This is Flagellar basal-body rod protein FlgG (flgG) from Salmonella typhi.